We begin with the raw amino-acid sequence, 229 residues long: E3 ubiquitin-protein ligase RNF114 (229 aa).

A disordered region spans residues 1-23 (MAAAQPESRDGAAQSAKPASETD). Residues 30 to 69 (CPVCLEVFEKPVQVPCGHVFCSACLQECLKPKKPVCGVCR) form an RING-type zinc finger. The Zn(2+) site is built by Cys-92 and Cys-95. The C2HC RNF-type zinc finger occupies 92 to 111 (CHGCRKNFILSKIRAHVTSC). At Lys-103 the chain carries N6-acetyllysine. The Zn(2+) site is built by His-107 and Cys-111. Lys-113 is subject to N6-acetyllysine.

In terms of assembly, interacts with XAF1, the interaction increases XAF1 stability and proapoptotic effects, and may regulate IFN signaling. Post-translationally, autoubiquitinated. Polyubiquitinated in the presence of E2 enzymes UBE2D1, UBE2D2 and UBE2D3, but only monoubiquitinated in the presence of UBE2E1.

The protein localises to the cytoplasm. The protein resides in the nucleus. The catalysed reaction is S-ubiquitinyl-[E2 ubiquitin-conjugating enzyme]-L-cysteine + [acceptor protein]-L-lysine = [E2 ubiquitin-conjugating enzyme]-L-cysteine + N(6)-ubiquitinyl-[acceptor protein]-L-lysine.. Its pathway is protein modification; protein ubiquitination. E3 ubiquitin-protein ligase that promotes the ubiquitination of various substrates. In turn, participates in the regulation of many biological processes including cell cycle, apoptosis, osteoclastogenesis as well as innate or adaptive immunity. Acts as negative regulator of NF-kappa-B-dependent transcription by promoting the ubiquitination and stabilization of the NF-kappa-B inhibitor TNFAIP3. May promote the ubiquitination of TRAF6 as well. Also acts as a negative regulator of T-cell activation. Inhibits cellular dsRNA responses and interferon production by targeting MAVS component for proteasomal degradation. Ubiquitinates the CDK inhibitor CDKN1A leading to its degradationand probably also CDKN1B and CDKN1C. This activity stimulates cell cycle G1-to-S phase transition and suppresses cellular senescence. May play a role in spermatogenesis. The chain is E3 ubiquitin-protein ligase RNF114 (Rnf114) from Mus musculus (Mouse).